The chain runs to 269 residues: Tryptophan synthase alpha chain (269 aa).

Residues E49 and D60 each act as proton acceptor in the active site.

It belongs to the TrpA family. In terms of assembly, tetramer of two alpha and two beta chains.

The catalysed reaction is (1S,2R)-1-C-(indol-3-yl)glycerol 3-phosphate + L-serine = D-glyceraldehyde 3-phosphate + L-tryptophan + H2O. The protein operates within amino-acid biosynthesis; L-tryptophan biosynthesis; L-tryptophan from chorismate: step 5/5. In terms of biological role, the alpha subunit is responsible for the aldol cleavage of indoleglycerol phosphate to indole and glyceraldehyde 3-phosphate. The protein is Tryptophan synthase alpha chain of Histophilus somni (strain 2336) (Haemophilus somnus).